Here is a 169-residue protein sequence, read N- to C-terminus: Glycine-rich RNA-binding protein GRP2A (169 aa).

Residues 8 to 86 (YRCFVGGLAW…RSITVNEAQS (79 aa)) enclose the RRM domain. 2 disordered regions span residues 69-100 (MNGQDLDGRSITVNEAQSRGSGAGGGGRGGGG) and 125-169 (YSGG…GGGW). The segment covering 89 to 100 (SGAGGGGRGGGG) has biased composition (gly residues).

Predominantly expressed in meristematic and growing tissue.

It is found in the nucleus. Functionally, may play a general role in circadian phenomena associated with meristematic tissue. This chain is Glycine-rich RNA-binding protein GRP2A, found in Sinapis alba (White mustard).